The sequence spans 153 residues: Aspartate carbamoyltransferase regulatory chain (153 aa).

Zn(2+)-binding residues include Cys-110, Cys-115, Cys-138, and Cys-141.

It belongs to the PyrI family. In terms of assembly, contains catalytic and regulatory chains. Zn(2+) is required as a cofactor.

In terms of biological role, involved in allosteric regulation of aspartate carbamoyltransferase. The protein is Aspartate carbamoyltransferase regulatory chain of Bacteroides fragilis (strain ATCC 25285 / DSM 2151 / CCUG 4856 / JCM 11019 / LMG 10263 / NCTC 9343 / Onslow / VPI 2553 / EN-2).